Reading from the N-terminus, the 124-residue chain is Large ribosomal subunit protein bL17 (124 aa).

The protein belongs to the bacterial ribosomal protein bL17 family. Part of the 50S ribosomal subunit. Contacts protein L32.

In Mycoplasma pneumoniae (strain ATCC 29342 / M129 / Subtype 1) (Mycoplasmoides pneumoniae), this protein is Large ribosomal subunit protein bL17.